We begin with the raw amino-acid sequence, 58 residues long: DNA-binding protein (58 aa).

Basic residues-rich tracts occupy residues 1-19 (MVRR…RSRS) and 28-58 (SRYR…NQYI). Residues 1 to 58 (MVRRRRSRSPYRRRSRSRSRSGSDRSRSRYRSRSRSRSRSRSRARSRSPYHHHINQYI) form a disordered region.

Post-translationally, probably phosphorylated in infected cells.

The protein resides in the virion. Functionally, thought to be responsible for DNA condensation during packaging of the nucleocapsids. This is DNA-binding protein (P7.3) from Cryptophlebia leucotreta granulosis virus (ClGV).